We begin with the raw amino-acid sequence, 190 residues long: UPF0200 protein TSIB_0920 (190 aa).

Residue 7–14 (GMPGSGKG) coordinates ATP.

Belongs to the UPF0200 family.

This Thermococcus sibiricus (strain DSM 12597 / MM 739) protein is UPF0200 protein TSIB_0920.